Consider the following 147-residue polypeptide: Hemoglobin subunit beta (147 aa).

N-acetylvaline is present on valine 2. Positions 3–147 constitute a Globin domain; that stretch reads HLTPEEKNAV…VANALAHKYH (145 aa). Position 13 is a phosphothreonine (threonine 13). Residue serine 45 is modified to Phosphoserine. Lysine 60 carries the N6-acetyllysine modification. Histidine 64 is a binding site for heme b. Lysine 83 bears the N6-acetyllysine mark. Histidine 93 contacts heme b. Cysteine 94 carries the post-translational modification S-nitrosocysteine. Lysine 145 is modified (N6-acetyllysine).

Belongs to the globin family. Heterotetramer of two alpha chains and two beta chains. As to expression, red blood cells.

In terms of biological role, involved in oxygen transport from the lung to the various peripheral tissues. The chain is Hemoglobin subunit beta (HBB) from Macaca fascicularis (Crab-eating macaque).